Reading from the N-terminus, the 775-residue chain is Glutamine--tRNA ligase (775 aa).

Ala-2 bears the N-acetylalanine mark. Position 70 is a phosphoserine (Ser-70). ATP is bound by residues 271–273 (EPN) and 277–283 (HIGHAKA). An L-glutamine-binding site is contributed by Asp-303. The residue at position 309 (Lys-309) is an N6-acetyllysine. Tyr-438 is a binding site for L-glutamine. Residues Thr-457, 486 to 487 (RL), and 494 to 496 (VSK) each bind ATP. Ser-495 is subject to Phosphoserine.

It belongs to the class-I aminoacyl-tRNA synthetase family. Monomer. Part of a multisubunit complex that groups tRNA ligases for Arg (RARS1), Asp (DARS1), Gln (QARS1), Ile (IARS1), Leu (LARS1), Lys (KARS1), Met (MARS1) the bifunctional ligase for Glu and Pro (EPRS1) and the auxiliary subunits AIMP1/p43, AIMP2/p38 and EEF1E1/p18. Interacts with RARS1. Part of a complex composed of RARS1, QARS1 and AIMP1.

The protein localises to the cytoplasm. The protein resides in the cytosol. The enzyme catalyses tRNA(Gln) + L-glutamine + ATP = L-glutaminyl-tRNA(Gln) + AMP + diphosphate. Functionally, glutamine--tRNA ligase. Plays a critical role in brain development. The chain is Glutamine--tRNA ligase (Qars1) from Mus musculus (Mouse).